The primary structure comprises 288 residues: Bifunctional protein FolD 1 (288 aa).

Residues 170-172 (GPG) and Ile-236 each bind NADP(+).

This sequence belongs to the tetrahydrofolate dehydrogenase/cyclohydrolase family. In terms of assembly, homodimer.

The enzyme catalyses (6R)-5,10-methylene-5,6,7,8-tetrahydrofolate + NADP(+) = (6R)-5,10-methenyltetrahydrofolate + NADPH. It catalyses the reaction (6R)-5,10-methenyltetrahydrofolate + H2O = (6R)-10-formyltetrahydrofolate + H(+). Its pathway is one-carbon metabolism; tetrahydrofolate interconversion. Its function is as follows. Catalyzes the oxidation of 5,10-methylenetetrahydrofolate to 5,10-methenyltetrahydrofolate and then the hydrolysis of 5,10-methenyltetrahydrofolate to 10-formyltetrahydrofolate. In Deinococcus geothermalis (strain DSM 11300 / CIP 105573 / AG-3a), this protein is Bifunctional protein FolD 1.